The following is a 450-amino-acid chain: MARNKGGLRFQPSGGARGPAIPVGKKQRLTIERLAHDGRGIAHEAGMTWFVSGGLPGEELEARVLGARSKVVDARSERLFSSSDLRRREPCTVAGRCGGCTLQHLEHGEQLALKQRTLQEQLQRFAGIEPEEWAAPLVGPEFGYRRRARIAVRWDARARRLDVGFRASASQEIVAFDECLVLVPPLQTIARALPALLQDFRKPESIGHVELFHGTASALLLRHTTALVDEDRQRLAAFCSAHQAQLWLQGAEQPLPVEPAAELGYSLGDWQLTLAYRPGDFVQVNAPVNESMIRQALDWLAPTADERVLDLFCGLGNFSLPLARRVARVVGVEGVAAMVERAGANALANGLGNAHFFQADLSKALAEAPWAEQGFTAVLLDPPRDGAFEAVREMSSLGARRVVYVSCNPATLARDAGEMARQGYRLKRAGILDMFPQTAHVEAMALFEAG.

The segment at 1 to 22 (MARNKGGLRFQPSGGARGPAIP) is disordered. In terms of domain architecture, TRAM spans 20-78 (AIPVGKKQRLTIERLAHDGRGIAHEAGMTWFVSGGLPGEELEARVLGARSKVVDARSER). Positions 91, 97, 100, and 179 each coordinate [4Fe-4S] cluster. The S-adenosyl-L-methionine site is built by Gln283, Phe312, Asn317, Glu333, Asp360, and Asp381. Cys407 serves as the catalytic Nucleophile.

The protein belongs to the class I-like SAM-binding methyltransferase superfamily. RNA M5U methyltransferase family. RlmD subfamily.

It carries out the reaction uridine(1939) in 23S rRNA + S-adenosyl-L-methionine = 5-methyluridine(1939) in 23S rRNA + S-adenosyl-L-homocysteine + H(+). Its function is as follows. Catalyzes the formation of 5-methyl-uridine at position 1939 (m5U1939) in 23S rRNA. The sequence is that of 23S rRNA (uracil(1939)-C(5))-methyltransferase RlmD from Pseudomonas aeruginosa (strain UCBPP-PA14).